Reading from the N-terminus, the 421-residue chain is UPF0415 protein C7orf25 (421 aa).

Belongs to the UPF0415 family.

This Homo sapiens (Human) protein is UPF0415 protein C7orf25 (C7orf25).